The primary structure comprises 443 residues: Methyl-coenzyme M reductase subunit beta (443 aa).

Tyrosine 367 provides a ligand contact to coenzyme M. Glycine 369 is a coenzyme B binding site.

This sequence belongs to the methyl-coenzyme M reductase beta subunit family. In terms of assembly, MCR is a hexamer of two alpha, two beta, and two gamma chains, forming a dimer of heterotrimers. Coenzyme F430 serves as cofactor.

It is found in the cytoplasm. The catalysed reaction is coenzyme B + methyl-coenzyme M = methane + coenzyme M-coenzyme B heterodisulfide. It functions in the pathway one-carbon metabolism; methyl-coenzyme M reduction; methane from methyl-coenzyme M: step 1/1. Functionally, component of the methyl-coenzyme M reductase (MCR) I that catalyzes the reductive cleavage of methyl-coenzyme M (CoM-S-CH3 or 2-(methylthio)ethanesulfonate) using coenzyme B (CoB or 7-mercaptoheptanoylthreonine phosphate) as reductant which results in the production of methane and the mixed heterodisulfide of CoB and CoM (CoM-S-S-CoB). This is the final step in methanogenesis. This is Methyl-coenzyme M reductase subunit beta (mcrB) from Methanococcus voltae.